The primary structure comprises 51 residues: Large ribosomal subunit protein bL33 (51 aa).

This sequence belongs to the bacterial ribosomal protein bL33 family.

In Colwellia psychrerythraea (strain 34H / ATCC BAA-681) (Vibrio psychroerythus), this protein is Large ribosomal subunit protein bL33.